Here is a 539-residue protein sequence, read N- to C-terminus: GMP synthase [glutamine-hydrolyzing] (539 aa).

In terms of domain architecture, Glutamine amidotransferase type-1 spans 4-202; it reads KILILDFGSQ…VLQIAGAKPD (199 aa). Cys-81 acts as the Nucleophile in catalysis. Catalysis depends on residues His-176 and Glu-178. Residues 203 to 395 form the GMPS ATP-PPase domain; it reads WIMKNHIEEA…LGLPPEMVYR (193 aa). 230–236 is a binding site for ATP; sequence SGGVDSS.

As to quaternary structure, homodimer.

The catalysed reaction is XMP + L-glutamine + ATP + H2O = GMP + L-glutamate + AMP + diphosphate + 2 H(+). Its pathway is purine metabolism; GMP biosynthesis; GMP from XMP (L-Gln route): step 1/1. In terms of biological role, catalyzes the synthesis of GMP from XMP. This chain is GMP synthase [glutamine-hydrolyzing], found in Burkholderia orbicola (strain AU 1054).